Here is an 89-residue protein sequence, read N- to C-terminus: Small ribosomal subunit protein bS20 (89 aa).

It belongs to the bacterial ribosomal protein bS20 family.

In terms of biological role, binds directly to 16S ribosomal RNA. The sequence is that of Small ribosomal subunit protein bS20 from Solidesulfovibrio magneticus (strain ATCC 700980 / DSM 13731 / RS-1) (Desulfovibrio magneticus).